An 87-amino-acid chain; its full sequence is Protein WFDC11 (87 aa).

An N-terminal signal peptide occupies residues Met-1–Gly-25.

It is found in the secreted. This chain is Protein WFDC11 (WFDC11), found in Homo sapiens (Human).